A 281-amino-acid chain; its full sequence is Bifunctional protein FolD (281 aa).

NADP(+) is bound by residues 165–167 (GRG), T192, and V233.

Belongs to the tetrahydrofolate dehydrogenase/cyclohydrolase family. As to quaternary structure, homodimer.

The catalysed reaction is (6R)-5,10-methylene-5,6,7,8-tetrahydrofolate + NADP(+) = (6R)-5,10-methenyltetrahydrofolate + NADPH. It carries out the reaction (6R)-5,10-methenyltetrahydrofolate + H2O = (6R)-10-formyltetrahydrofolate + H(+). It functions in the pathway one-carbon metabolism; tetrahydrofolate interconversion. Its function is as follows. Catalyzes the oxidation of 5,10-methylenetetrahydrofolate to 5,10-methenyltetrahydrofolate and then the hydrolysis of 5,10-methenyltetrahydrofolate to 10-formyltetrahydrofolate. The chain is Bifunctional protein FolD from Mycobacterium tuberculosis (strain ATCC 25177 / H37Ra).